The following is a 311-amino-acid chain: Pyrimidine-specific ribonucleoside hydrolase RihA (311 aa).

The active site involves His-240.

Belongs to the IUNH family. RihA subfamily.

In terms of biological role, hydrolyzes cytidine or uridine to ribose and cytosine or uracil, respectively. The polypeptide is Pyrimidine-specific ribonucleoside hydrolase RihA (Salmonella dublin (strain CT_02021853)).